We begin with the raw amino-acid sequence, 372 residues long: Chloromuconate cycloisomerase (372 aa).

The active-site Proton acceptor is K158. Residues D187, E213, and D238 each contribute to the Mn(2+) site. E316 acts as the Proton donor in catalysis.

This sequence belongs to the mandelate racemase/muconate lactonizing enzyme family. The cofactor is Mn(2+).

The catalysed reaction is 2-[(2R)-2-chloro-2,5-dihydro-5-oxofuryl]acetate = 3-chloro-cis,cis-muconate + H(+). Its pathway is aromatic compound metabolism; 3-chlorocatechol degradation. The polypeptide is Chloromuconate cycloisomerase (tfdDII) (Cupriavidus pinatubonensis (strain JMP 134 / LMG 1197) (Cupriavidus necator (strain JMP 134))).